Reading from the N-terminus, the 473-residue chain is Endoglucanase B (473 aa).

Residues 1–17 (MKFLNTFSLLSLAIIGS) form the signal peptide. Residues 18 to 367 (KAMKNISSKE…GLIKGLGNSI (350 aa)) are catalytic. Catalysis depends on E173, which acts as the Proton donor. The active-site Nucleophile is the E295. Residues 365–387 (NSIKTRTTIRRTTTTTTSQSQPT) form a linker region. CBM10 domains are found at residues 391–427 (SCFSVNLGYSCCNGCEVEYTDSDGEWGVENGNWCGIK) and 436–473 (ICWSEKLGYPCCQNTSSVVYTDNDGKWGVENGNWCGIY).

The protein belongs to the glycosyl hydrolase 5 (cellulase A) family.

The catalysed reaction is Endohydrolysis of (1-&gt;4)-beta-D-glucosidic linkages in cellulose, lichenin and cereal beta-D-glucans.. Functionally, rate of hydrolysis of cellulo-oligosaccharides increased with increasing chain length from cellotriose to cellopentaose. This Neocallimastix patriciarum (Rumen fungus) protein is Endoglucanase B (CELB).